Here is a 355-residue protein sequence, read N- to C-terminus: Protein RecA (355 aa).

Glycine 69–threonine 76 serves as a coordination point for ATP. The disordered stretch occupies residues alanine 329 to valine 355.

It belongs to the RecA family.

The protein localises to the cytoplasm. Functionally, can catalyze the hydrolysis of ATP in the presence of single-stranded DNA, the ATP-dependent uptake of single-stranded DNA by duplex DNA, and the ATP-dependent hybridization of homologous single-stranded DNAs. It interacts with LexA causing its activation and leading to its autocatalytic cleavage. The protein is Protein RecA of Desulfotalea psychrophila (strain LSv54 / DSM 12343).